A 99-amino-acid chain; its full sequence is Cyclin-dependent protein kinase inhibitor SMR7 (99 aa).

The segment at 49-70 (ICITPTARGAKTPECPAAPRKR) is disordered.

In terms of tissue distribution, expressed in root meristems after induction.

In terms of biological role, probable cyclin-dependent protein kinase (CDK) inhibitor that functions as a repressor of mitosis in the endoreduplication cell cycle. Acts as a potent cell cycle inhibitor, regulating a hydroxyurea-dependent checkpoint in leaves. This Arabidopsis thaliana (Mouse-ear cress) protein is Cyclin-dependent protein kinase inhibitor SMR7.